We begin with the raw amino-acid sequence, 360 residues long: Photosystem II protein D1 (360 aa).

3 helical membrane passes run 29-46 (YIGW…TATS), 118-133 (HFFI…EWEL), and 142-156 (WIAV…AATA). Residue His-118 participates in chlorophyll a binding. Position 126 (Tyr-126) interacts with pheophytin a. Asp-170 and Glu-189 together coordinate [CaMn4O5] cluster. Residues 197–218 (FHMMGVAGVFGGSLFSAMHGSL) traverse the membrane as a helical segment. His-198 contacts chlorophyll a. A quinone-binding positions include His-215 and 264-265 (SF). His-215 serves as a coordination point for Fe cation. His-272 is a Fe cation binding site. The chain crosses the membrane as a helical span at residues 274–288 (FLALWPVVCICVTAL). [CaMn4O5] cluster contacts are provided by His-332, Glu-333, Asp-342, and Ala-344. Positions 345–360 (SEVSLPVALNKVEING) are excised as a propeptide.

This sequence belongs to the reaction center PufL/M/PsbA/D family. In terms of assembly, PSII is composed of 1 copy each of membrane proteins PsbA, PsbB, PsbC, PsbD, PsbE, PsbF, PsbH, PsbI, PsbJ, PsbK, PsbL, PsbM, PsbT, PsbY, PsbZ, Psb30/Ycf12, at least 3 peripheral proteins of the oxygen-evolving complex and a large number of cofactors. It forms dimeric complexes. The D1/D2 heterodimer binds P680, chlorophylls that are the primary electron donor of PSII, and subsequent electron acceptors. It shares a non-heme iron and each subunit binds pheophytin, quinone, additional chlorophylls, carotenoids and lipids. D1 provides most of the ligands for the Mn4-Ca-O5 cluster of the oxygen-evolving complex (OEC). There is also a Cl(-1) ion associated with D1 and D2, which is required for oxygen evolution. The PSII complex binds additional chlorophylls, carotenoids and specific lipids. serves as cofactor. Tyr-161 forms a radical intermediate that is referred to as redox-active TyrZ, YZ or Y-Z. In terms of processing, C-terminally processed by CTPA; processing is essential to allow assembly of the oxygen-evolving complex and thus photosynthetic growth.

The protein localises to the plastid. The protein resides in the chloroplast thylakoid membrane. It catalyses the reaction 2 a plastoquinone + 4 hnu + 2 H2O = 2 a plastoquinol + O2. Photosystem II (PSII) is a light-driven water:plastoquinone oxidoreductase that uses light energy to abstract electrons from H(2)O, generating O(2) and a proton gradient subsequently used for ATP formation. It consists of a core antenna complex that captures photons, and an electron transfer chain that converts photonic excitation into a charge separation. The D1/D2 (PsbA/PsbD) reaction center heterodimer binds P680, the primary electron donor of PSII as well as several subsequent electron acceptors. The protein is Photosystem II protein D1 of Galdieria sulphuraria (Red alga).